Consider the following 272-residue polypeptide: Tryptophan synthase alpha chain (272 aa).

Catalysis depends on proton acceptor residues Glu-49 and Glu-60.

This sequence belongs to the TrpA family. In terms of assembly, tetramer of two alpha and two beta chains.

The catalysed reaction is (1S,2R)-1-C-(indol-3-yl)glycerol 3-phosphate + L-serine = D-glyceraldehyde 3-phosphate + L-tryptophan + H2O. The protein operates within amino-acid biosynthesis; L-tryptophan biosynthesis; L-tryptophan from chorismate: step 5/5. Functionally, the alpha subunit is responsible for the aldol cleavage of indoleglycerol phosphate to indole and glyceraldehyde 3-phosphate. This chain is Tryptophan synthase alpha chain, found in Legionella pneumophila (strain Corby).